The following is a 762-amino-acid chain: 5-methyltetrahydropteroyltriglutamate--homocysteine methyltransferase (762 aa).

5-methyltetrahydropteroyltri-L-glutamate is bound by residues 18–21 (REWK) and lysine 112. L-homocysteine is bound by residues 435 to 437 (IGS) and glutamate 488. L-methionine-binding positions include 435–437 (IGS) and glutamate 488. 5-methyltetrahydropteroyltri-L-glutamate is bound by residues 519–520 (RC) and tryptophan 565. Aspartate 603 serves as a coordination point for L-homocysteine. Aspartate 603 lines the L-methionine pocket. A 5-methyltetrahydropteroyltri-L-glutamate-binding site is contributed by glutamate 609. The Zn(2+) site is built by histidine 645, cysteine 647, and glutamate 669. Residue histidine 698 is the Proton donor of the active site. Residue cysteine 730 participates in Zn(2+) binding.

Belongs to the vitamin-B12 independent methionine synthase family. The cofactor is Zn(2+).

The enzyme catalyses 5-methyltetrahydropteroyltri-L-glutamate + L-homocysteine = tetrahydropteroyltri-L-glutamate + L-methionine. The protein operates within amino-acid biosynthesis; L-methionine biosynthesis via de novo pathway; L-methionine from L-homocysteine (MetE route): step 1/1. In terms of biological role, catalyzes the transfer of a methyl group from 5-methyltetrahydrofolate to homocysteine resulting in methionine formation. The polypeptide is 5-methyltetrahydropteroyltriglutamate--homocysteine methyltransferase (Bacillus licheniformis (strain ATCC 14580 / DSM 13 / JCM 2505 / CCUG 7422 / NBRC 12200 / NCIMB 9375 / NCTC 10341 / NRRL NRS-1264 / Gibson 46)).